The primary structure comprises 414 residues: Acetate kinase (414 aa).

N7 is a Mg(2+) binding site. An ATP-binding site is contributed by K14. R99 lines the substrate pocket. Residue D157 is the Proton donor/acceptor of the active site. ATP-binding positions include H217–G221 and G341–N345. Residue E395 coordinates Mg(2+).

Belongs to the acetokinase family. In terms of assembly, homodimer. Mg(2+) is required as a cofactor. Requires Mn(2+) as cofactor.

It localises to the cytoplasm. The catalysed reaction is acetate + ATP = acetyl phosphate + ADP. Its pathway is metabolic intermediate biosynthesis; acetyl-CoA biosynthesis; acetyl-CoA from acetate: step 1/2. Functionally, catalyzes the formation of acetyl phosphate from acetate and ATP. Can also catalyze the reverse reaction. The chain is Acetate kinase from Solibacter usitatus (strain Ellin6076).